The sequence spans 248 residues: 2,3-bisphosphoglycerate-dependent phosphoglycerate mutase (248 aa).

Substrate contacts are provided by residues 8–15 (RHGESTWN), 21–22 (TG), Arg-60, 87–90 (ERHY), Lys-98, 114–115 (RR), and 183–184 (GN). Residue His-9 is the Tele-phosphohistidine intermediate of the active site. Glu-87 serves as the catalytic Proton donor/acceptor.

The protein belongs to the phosphoglycerate mutase family. BPG-dependent PGAM subfamily. Homodimer.

It carries out the reaction (2R)-2-phosphoglycerate = (2R)-3-phosphoglycerate. It participates in carbohydrate degradation; glycolysis; pyruvate from D-glyceraldehyde 3-phosphate: step 3/5. Catalyzes the interconversion of 2-phosphoglycerate and 3-phosphoglycerate. The polypeptide is 2,3-bisphosphoglycerate-dependent phosphoglycerate mutase (Paraburkholderia phymatum (strain DSM 17167 / CIP 108236 / LMG 21445 / STM815) (Burkholderia phymatum)).